We begin with the raw amino-acid sequence, 466 residues long: Ferrochelatase-1, chloroplastic/mitochondrial (466 aa).

Over residues 1–11 (MQATALSSGFN) the composition is skewed to polar residues. A disordered region spans residues 1 to 23 (MQATALSSGFNPLTKRKDHRFPR). The transit peptide at 1–35 (MQATALSSGFNPLTKRKDHRFPRSCSQRNSLSLIQ) directs the protein to the chloroplast and mitochondrion.

This sequence belongs to the ferrochelatase family. Expressed in roots, leaves, stems and flowers. Present in both leaves and roots.

Its subcellular location is the plastid. The protein resides in the chloroplast membrane. It is found in the chloroplast thylakoid membrane. The protein localises to the mitochondrion. It catalyses the reaction heme b + 2 H(+) = protoporphyrin IX + Fe(2+). It functions in the pathway porphyrin-containing compound metabolism; protoheme biosynthesis; protoheme from protoporphyrin-IX: step 1/1. Its function is as follows. Catalyzes the last step of heme biosynthesis by inserting ferrous iron into protoporphyrin IX to produce protoheme. Produces heme for photosynthetic cytochromes, but does not seem to be involved in stress responses. May be involved in wound-induced supply of heme to defensive hemoproteins outside plastids. Regulates the expression of photosynthesis-associated nuclear genes in undeveloped chloroplasts through production of heme. The polypeptide is Ferrochelatase-1, chloroplastic/mitochondrial (Arabidopsis thaliana (Mouse-ear cress)).